The chain runs to 876 residues: Protein TORMOZ EMBRYO DEFECTIVE (876 aa).

WD repeat units follow at residues 58-97 (GESD…CIRS), 100-139 (GHEG…CTHY), 142-183 (GHKG…TEKK), 190-229 (KHFS…CKAT), 255-294 (LDQK…CLYE), 308-347 (ESKR…EETE), 356-396 (GYNE…CSYV), 399-441 (GHKE…CIGV), 444-484 (GHNG…EDSE), 497-536 (AHDK…HVVT), 539-580 (GHKR…KTFE), 581-620 (GHTS…CIAT), and 623-662 (QHED…DKED). The disordered stretch occupies residues 816 to 876 (VETEYPKDEK…AEAQGSVIAV (61 aa)). Residues 819-831 (EYPKDEKKKEKDV) show a composition bias toward basic and acidic residues. The Nuclear localization signal signature appears at 848-855 (SRKRKSQK). Residues 849–864 (RKRKSQKSKGKSNKKR) show a composition bias toward basic residues.

As to expression, preferentially expressed in dividing cells in a variety of tissues and meristematic regions.

It localises to the nucleus. Its subcellular location is the nucleolus. Essential protein involved in the regulation of cell division planes during embryogenesis which defines cell patterning, especially longitudinal division planes of the proembryo, probably via the regulation of embryo patterning genes expression patterns. The chain is Protein TORMOZ EMBRYO DEFECTIVE from Arabidopsis thaliana (Mouse-ear cress).